The primary structure comprises 222 residues: UPF0758 protein Ppha_0935 (222 aa).

Residues K100 to L222 enclose the MPN domain. Zn(2+)-binding residues include H171, H173, and D184. The JAMM motif motif lies at H171–D184.

This sequence belongs to the UPF0758 family.

The polypeptide is UPF0758 protein Ppha_0935 (Pelodictyon phaeoclathratiforme (strain DSM 5477 / BU-1)).